The following is a 97-amino-acid chain: MKRICSIYRSPKRNEMYLYVLKSDVLKRVPPELLVAFGKPVHAFDLVLSPERALSREDINAVLKNLDSQGYHLQMPPAEDEYIEHLPEELLRRNDPM.

One can recognise a YcgL domain in the interval arginine 3–proline 87.

This is YcgL domain-containing protein PSPTO_3921 from Pseudomonas syringae pv. tomato (strain ATCC BAA-871 / DC3000).